The primary structure comprises 179 residues: Large ribosomal subunit protein uL5 (179 aa).

This sequence belongs to the universal ribosomal protein uL5 family. Part of the 50S ribosomal subunit; part of the 5S rRNA/L5/L18/L25 subcomplex. Contacts the 5S rRNA and the P site tRNA. Forms a bridge to the 30S subunit in the 70S ribosome.

This is one of the proteins that bind and probably mediate the attachment of the 5S RNA into the large ribosomal subunit, where it forms part of the central protuberance. In the 70S ribosome it contacts protein S13 of the 30S subunit (bridge B1b), connecting the 2 subunits; this bridge is implicated in subunit movement. Contacts the P site tRNA; the 5S rRNA and some of its associated proteins might help stabilize positioning of ribosome-bound tRNAs. The sequence is that of Large ribosomal subunit protein uL5 from Proteus mirabilis (strain HI4320).